We begin with the raw amino-acid sequence, 352 residues long: MDYQVSSPTYDIDYYTSEPCQKVNVKQIAARLLPPLYSLVFIFGFVGNILVVLILINCKRLKSMTDIYLLNLAISDLFFLLTVPFWAHYAAAQWDFGNTMCQLLTGLYFIGFFSGIFFIILLTIDRYLAIVHAVFALKARTVTFGVVTSVITWVVAVFASLPGIIFTRSQREGLHYTCSSHFPYSQYQFWKNFQTLKIVILGLVLPLLVMVICYSGILKTLLRCRSEKKRHRAVRLIFTIMIVYFLFWAPYNIVLLLNTFQEFFGLNNCSSSNRLDQAMQVTETLGMTHCCINPIIYAFVGEKFRNYLLVFFQKHIAKHFCKCCSIFQQEAPERASSVYTRSTGEQEISVGL.

The Extracellular portion of the chain corresponds to 1–30; it reads MDYQVSSPTYDIDYYTSEPCQKVNVKQIAA. At Y3 the chain carries Sulfotyrosine. O-linked (GalNAc...) serine glycosylation is found at S6 and S7. A sulfotyrosine mark is found at Y10, Y14, and Y15. Intrachain disulfides connect C20–C269 and C101–C178. Residues 31–58 traverse the membrane as a helical segment; sequence RLLPPLYSLVFIFGFVGNILVVLILINC. Topologically, residues 59-68 are cytoplasmic; that stretch reads KRLKSMTDIY. The helical transmembrane segment at 69-89 threads the bilayer; sequence LLNLAISDLFFLLTVPFWAHY. The Extracellular segment spans residues 90 to 102; the sequence is AAAQWDFGNTMCQ. Residues 103 to 124 traverse the membrane as a helical segment; it reads LLTGLYFIGFFSGIFFIILLTI. Topologically, residues 125-141 are cytoplasmic; sequence DRYLAIVHAVFALKART. A helical membrane pass occupies residues 142–166; the sequence is VTFGVVTSVITWVVAVFASLPGIIF. Residues 167–198 lie on the Extracellular side of the membrane; sequence TRSQREGLHYTCSSHFPYSQYQFWKNFQTLKI. Residues 199 to 218 form a helical membrane-spanning segment; that stretch reads VILGLVLPLLVMVICYSGIL. Over 219–235 the chain is Cytoplasmic; sequence KTLLRCRSEKKRHRAVR. A helical transmembrane segment spans residues 236 to 260; sequence LIFTIMIVYFLFWAPYNIVLLLNTF. Over 261–277 the chain is Extracellular; it reads QEFFGLNNCSSSNRLDQ. A helical transmembrane segment spans residues 278–301; it reads AMQVTETLGMTHCCINPIIYAFVG. Residues 302 to 352 are Cytoplasmic-facing; sequence EKFRNYLLVFFQKHIAKHFCKCCSIFQQEAPERASSVYTRSTGEQEISVGL. S-palmitoyl cysteine attachment occurs at residues C321, C323, and C324. Residues S336, S337, S342, and S349 each carry the phosphoserine; by BARK1 modification.

Belongs to the G-protein coupled receptor 1 family. As to quaternary structure, interacts with PRAF2. Efficient ligand binding to CCL3/MIP-1alpha and CCL4/MIP-1beta requires sulfation, O-glycosylation and sialic acid modifications. Glycosylation on Ser-6 is required for efficient binding of CCL4. Interacts with GRK2. Interacts with ARRB1 and ARRB2. Interacts with CNIH4. Interacts with S100A4; this interaction stimulates T-lymphocyte chemotaxis. In terms of processing, sulfated on at least 2 of the N-terminal tyrosines. Sulfation is required for efficient binding of the chemokines, CCL3 and CCL4. Palmitoylation in the C-terminal is important for cell surface expression. Post-translationally, phosphorylation on serine residues in the C-terminal is stimulated by binding CC chemokines especially by APO-RANTES. In terms of processing, O-glycosylated, but not N-glycosylated. Ser-6 appears to be the major site even if Ser-7 may be also O-glycosylated. Also sialylated glycans present which contribute to chemokine binding. Thr-16 and Ser-17 may also be glycosylated and, if so, with small moieties such as a T-antigen.

It localises to the cell membrane. Its function is as follows. Receptor for a number of inflammatory CC-chemokines including CCL3/MIP-1-alpha, CCL4/MIP-1-beta and RANTES and subsequently transduces a signal by increasing the intracellular calcium ion level. May play a role in the control of granulocytic lineage proliferation or differentiation. Participates in T-lymphocyte migration to the infection site by acting as a chemotactic receptor. The polypeptide is C-C chemokine receptor type 5 (CCR5) (Trachypithecus johnii (Nilgiri langur)).